The sequence spans 503 residues: Cytochrome P450 monooxygenase roqO (503 aa).

A helical membrane pass occupies residues 11–31; sequence YSGTACAISLFIFGITLLFPF. An N-linked (GlcNAc...) asparagine glycan is attached at N205. A heme-binding site is contributed by C444.

Belongs to the cytochrome P450 family. It depends on heme as a cofactor.

The protein resides in the membrane. Its pathway is alkaloid biosynthesis. Cytochrome P450 monooxygenase; part of the gene cluster that mediates the biosynthesis of the mycotoxin meleagrin. The first stage is catalyzed by the dipeptide synthase roqA which condenses histidine and tryptophan to produce histidyltryptophanyldiketopiperazine (HTD). HTD is then converted to roquefortine C through two possible pathways. In the first pathway, prenyltransferase roqD transforms HTD to the intermediate roquefortine D, which is in turn converted to roquefortine C by the cytochrome P450 monooxygenase roqR. In the second pathway, HTD is first converted to the intermediate dehydrohistidyltryptophanyldi-ketopiperazine (DHTD) by roqR which is then prenylated by roqD to form roquefortine C. Roquefortine C can be further transformed to meleagrin via three more reactions including oxydation to glandicolin A by roqM, which is further reduced to glandicoline B by roqO. Finally, glandicoline B is converted to meleagrin by the glandicoline B O-methyltransferase roqN. More studies identified further branching and additional metabolites produced by the roquefortine/meleagrin cluster, including roquefortine F, roquefortine L, roquefortine M, roquefortine N and neoxaline. This Penicillium rubens (strain ATCC 28089 / DSM 1075 / NRRL 1951 / Wisconsin 54-1255) (Penicillium chrysogenum) protein is Cytochrome P450 monooxygenase roqO.